The primary structure comprises 165 residues: Urease accessory protein UreE (165 aa).

The protein belongs to the UreE family.

The protein resides in the cytoplasm. In terms of biological role, involved in urease metallocenter assembly. Binds nickel. Probably functions as a nickel donor during metallocenter assembly. The protein is Urease accessory protein UreE of Micrococcus luteus (strain ATCC 4698 / DSM 20030 / JCM 1464 / CCM 169 / CCUG 5858 / IAM 1056 / NBRC 3333 / NCIMB 9278 / NCTC 2665 / VKM Ac-2230) (Micrococcus lysodeikticus).